The following is a 328-amino-acid chain: Oligopeptide transport ATP-binding protein AppD (328 aa).

One can recognise an ABC transporter domain in the interval 5 to 256; that stretch reads LEVNNLKTYF…PLHPYTEGLL (252 aa). ATP is bound at residue 41-48; sequence GESGSGKS.

This sequence belongs to the ABC transporter superfamily.

Its subcellular location is the cell membrane. Functionally, this protein is a component of an oligopeptide permease, a binding protein-dependent transport system. This APP system can completely substitute for the OPP system in both sporulation and genetic competence, though, unlike OPP, is incapable of transporting tripeptides. Probably responsible for energy coupling to the transport system. This chain is Oligopeptide transport ATP-binding protein AppD (appD), found in Bacillus subtilis (strain 168).